The primary structure comprises 227 residues: Transmembrane emp24 domain-containing protein 4 (227 aa).

The first 29 residues, 1–29 (MAGVGAGPLRAMGRQALLLLALCATGAQG), serve as a signal peptide directing secretion. The Lumenal portion of the chain corresponds to 30–194 (LYFHIGETEK…RLTSESTNQR (165 aa)). Positions 39-137 (KRCFIEEIPD…KLRVHLDIQV (99 aa)) constitute a GOLD domain. Residue asparagine 117 is glycosylated (N-linked (GlcNAc...) asparagine). A coiled-coil region spans residues 147 to 176 (IAAKDKLTELQLRARQLLDQVEQIQKEQDY). Residues 195–212 (VLWWSIAQTVILILTGIW) form a helical membrane-spanning segment. The Cytoplasmic portion of the chain corresponds to 213-227 (QMRHLKSFFEAKKLV). A COPII vesicle coat-binding motif is present at residues 220-221 (FF). The short motif at 220–227 (FFEAKKLV) is the COPI vesicle coat-binding element.

The protein belongs to the EMP24/GP25L family.

It is found in the endoplasmic reticulum membrane. In terms of biological role, involved in vesicular protein trafficking, mainly in the early secretory pathway. targeting. Involved in the maintenance of the Golgi apparatus. Appears to play a role in the biosynthesis of secreted cargo including processing. Involved in endoplasmic reticulum stress response. May play a role in the regulation of heat-shock response and apoptosis. This Homo sapiens (Human) protein is Transmembrane emp24 domain-containing protein 4 (TMED4).